The sequence spans 87 residues: U3-theraphotoxin-Hhn1a 10 (87 aa).

Residues 1-24 (MVNMEASMFLTFAGLVLLFVVCYA) form the signal peptide. A propeptide spanning residues 25 to 52 (SESEEKEFPKEMLSSIFAVDNDFKQEER) is cleaved from the precursor. Cystine bridges form between Cys-54-Cys-67, Cys-61-Cys-72, and Cys-66-Cys-79.

It belongs to the neurotoxin 10 (Hwtx-1) family. 51 (Hntx-8) subfamily. Hntx-8 sub-subfamily. As to expression, expressed by the venom gland.

It is found in the secreted. In terms of biological role, ion channel inhibitor. The sequence is that of U3-theraphotoxin-Hhn1a 10 from Cyriopagopus hainanus (Chinese bird spider).